The chain runs to 387 residues: Sulfate adenylyltransferase (387 aa).

The protein belongs to the sulfate adenylyltransferase family.

The catalysed reaction is sulfate + ATP + H(+) = adenosine 5'-phosphosulfate + diphosphate. It functions in the pathway sulfur metabolism; hydrogen sulfide biosynthesis; sulfite from sulfate: step 1/3. The sequence is that of Sulfate adenylyltransferase (sat) from Deinococcus radiodurans (strain ATCC 13939 / DSM 20539 / JCM 16871 / CCUG 27074 / LMG 4051 / NBRC 15346 / NCIMB 9279 / VKM B-1422 / R1).